The sequence spans 137 residues: Large ribosomal subunit protein uL16 (137 aa).

It belongs to the universal ribosomal protein uL16 family. As to quaternary structure, part of the 50S ribosomal subunit.

Its function is as follows. Binds 23S rRNA and is also seen to make contacts with the A and possibly P site tRNAs. In Leuconostoc citreum (strain KM20), this protein is Large ribosomal subunit protein uL16.